The primary structure comprises 387 residues: Gamma-butyrobetaine dioxygenase (387 aa).

Zn(2+)-binding residues include cysteine 38, cysteine 40, cysteine 43, and histidine 82. Histidine 202, aspartate 204, and histidine 347 together coordinate Fe cation. Position 351 is a phosphoserine (serine 351).

It belongs to the gamma-BBH/TMLD family. Fe(2+) serves as cofactor. Requires L-ascorbate as cofactor. In terms of tissue distribution, highly expressed in kidney; moderately expressed in liver; very low expression in brain.

Its subcellular location is the cytoplasm. It carries out the reaction 4-(trimethylamino)butanoate + 2-oxoglutarate + O2 = carnitine + succinate + CO2. It functions in the pathway amine and polyamine biosynthesis; carnitine biosynthesis. Functionally, catalyzes the formation of L-carnitine from gamma-butyrobetaine. In Homo sapiens (Human), this protein is Gamma-butyrobetaine dioxygenase (BBOX1).